Consider the following 388-residue polypeptide: Succinate--CoA ligase [ADP-forming] subunit beta (388 aa).

The ATP-grasp domain maps to 9 to 244; it reads KQLFAEYGLP…PSQEDEREAH (236 aa). ATP is bound by residues K46, 53 to 55, E99, T102, and E107; that span reads GRG. Positions 199 and 213 each coordinate Mg(2+). Residues N264 and 321–323 each bind substrate; that span reads GIV.

It belongs to the succinate/malate CoA ligase beta subunit family. Heterotetramer of two alpha and two beta subunits. Mg(2+) is required as a cofactor.

The catalysed reaction is succinate + ATP + CoA = succinyl-CoA + ADP + phosphate. The enzyme catalyses GTP + succinate + CoA = succinyl-CoA + GDP + phosphate. The protein operates within carbohydrate metabolism; tricarboxylic acid cycle; succinate from succinyl-CoA (ligase route): step 1/1. Succinyl-CoA synthetase functions in the citric acid cycle (TCA), coupling the hydrolysis of succinyl-CoA to the synthesis of either ATP or GTP and thus represents the only step of substrate-level phosphorylation in the TCA. The beta subunit provides nucleotide specificity of the enzyme and binds the substrate succinate, while the binding sites for coenzyme A and phosphate are found in the alpha subunit. This is Succinate--CoA ligase [ADP-forming] subunit beta from Colwellia psychrerythraea (strain 34H / ATCC BAA-681) (Vibrio psychroerythus).